Here is a 250-residue protein sequence, read N- to C-terminus: tRNA (guanine-N(1)-)-methyltransferase (250 aa).

Residues Gly113 and Ile133 to Leu138 each bind S-adenosyl-L-methionine.

It belongs to the RNA methyltransferase TrmD family. As to quaternary structure, homodimer.

Its subcellular location is the cytoplasm. It carries out the reaction guanosine(37) in tRNA + S-adenosyl-L-methionine = N(1)-methylguanosine(37) in tRNA + S-adenosyl-L-homocysteine + H(+). In terms of biological role, specifically methylates guanosine-37 in various tRNAs. The polypeptide is tRNA (guanine-N(1)-)-methyltransferase (Shewanella amazonensis (strain ATCC BAA-1098 / SB2B)).